The chain runs to 145 residues: Putative sterol 14-demethylase-like protein (145 aa).

Residues 5 to 25 (YYTLLKTSVAIIIVFVVAKLI) form a helical membrane-spanning segment.

It belongs to the cytochrome P450 family. Expressed specifically in roots.

It localises to the membrane. The polypeptide is Putative sterol 14-demethylase-like protein (CYP51G2) (Arabidopsis thaliana (Mouse-ear cress)).